Here is a 555-residue protein sequence, read N- to C-terminus: Potassium-transporting ATPase potassium-binding subunit (555 aa).

The next 10 membrane-spanning stretches (helical) occupy residues 2–22 (IWVA…PTGI), 60–80 (QYAL…YFIF), 130–150 (IGIT…VMAF), 173–193 (VFLP…VPQT), 246–266 (MSNI…PFTY), 278–298 (ILFV…TTSE), 374–394 (AGFV…GLMV), 412–432 (LIAV…ALAL), 483–503 (LVMF…AASL), and 525–545 (GIFI…MLVL).

The protein belongs to the KdpA family. In terms of assembly, the system is composed of three essential subunits: KdpA, KdpB and KdpC.

The protein resides in the cell membrane. In terms of biological role, part of the high-affinity ATP-driven potassium transport (or Kdp) system, which catalyzes the hydrolysis of ATP coupled with the electrogenic transport of potassium into the cytoplasm. This subunit binds the extracellular potassium ions and delivers the ions to the membrane domain of KdpB through an intramembrane tunnel. The polypeptide is Potassium-transporting ATPase potassium-binding subunit (Bacillus anthracis (strain A0248)).